Reading from the N-terminus, the 510-residue chain is MKLKPIEVAEILQKEIANINCLSELEEVGQVITVGDGIAQIYGLANVKSGEVVEFKSGVKGLVLNLENDSVGAVIMGDDNQVQQGDNVKRTKEVLEVPVGKALLGRVVDALGNPIDGKGDIASKEYRHIEMKAPGIIERTSVSEPVQTGIKAIDSLIPIGRGQRELIIGDRQTGKTAIAVDTIINQKQAHSLTNESDKIYCIYVAIGQKRSSVAQIVKKLEDAGAMDYTLIVSATASEAAALQFIAPYSACSMGEYFRDNGMHALIIYDDLSKHAVAYRQISLLLRRPPGREAYPGDVFYLHSRLLERAAKMSEAKGSGSLTALPIIETQAGDVSAYIPTNVISITDGQIFLESELFYKGVRPAVNVGISVSRVGSAAQIKAMKQVAGSVKLELAQFRELESFSQFGSDLDPATKAQIDHGKRLVEILKQAQYHPFPVEEQIVSIYVGTKKYLNDVPIQKVKEFEDKMLTEIRLNKKDILESIKNEQRITEETEQKLKAFLENFVKKFVK.

Residue 169–176 (GDRQTGKT) participates in ATP binding.

Belongs to the ATPase alpha/beta chains family. F-type ATPases have 2 components, CF(1) - the catalytic core - and CF(0) - the membrane proton channel. CF(1) has five subunits: alpha(3), beta(3), gamma(1), delta(1), epsilon(1). CF(0) has three main subunits: a(1), b(2) and c(9-12). The alpha and beta chains form an alternating ring which encloses part of the gamma chain. CF(1) is attached to CF(0) by a central stalk formed by the gamma and epsilon chains, while a peripheral stalk is formed by the delta and b chains.

Its subcellular location is the cell inner membrane. The enzyme catalyses ATP + H2O + 4 H(+)(in) = ADP + phosphate + 5 H(+)(out). Functionally, produces ATP from ADP in the presence of a proton gradient across the membrane. The alpha chain is a regulatory subunit. This is ATP synthase subunit alpha from Rickettsia massiliae (strain Mtu5).